Reading from the N-terminus, the 340-residue chain is Sulfotransferase ppzF (340 aa).

It participates in secondary metabolite biosynthesis. Functionally, sulfotransferase; part of the gene cluster that mediates the biosynthesis of pyrrolopyrazines, secondary metabolites showing insecticidal activity. The role of ppzF within the pathway has still to be determined. The single multifunctional NRPS ppzA is sufficient to produce peramine via condensation of 1-pyrroline-5-carboxylate and arginine, N-methylation of the alpha-amino group of arginine and reduction of the thioester and the cyclization to form an iminium ion resulting in release from the peptide synthetase. Deprotonation of this intermediate and oxidation of the pyrroline ring would give rise to peramine. In Epichloe species that produce only peramine, the peramine synthetase gene is not localized in a gene cluster, in contrast to Metarhizium species that contain additional pyrrolopyrazine biosynthesis genes. The 2-oxoglutarate-Fe(II) type oxidoreductase ppzC hydroxylates peramine to yield the newly identified compound 8-hydroxyperamine whereas ppzD converts L-proline into trans-4-hydroxy-L-proline, a precursor of peramine biosynthesis. This Metarhizium majus (strain ARSEF 297) protein is Sulfotransferase ppzF.